A 184-amino-acid chain; its full sequence is ATP synthase subunit b, chloroplastic (184 aa).

A helical membrane pass occupies residues 27–49 (FATNPINLSVVLGVLIFFGKGVL).

This sequence belongs to the ATPase B chain family. F-type ATPases have 2 components, F(1) - the catalytic core - and F(0) - the membrane proton channel. F(1) has five subunits: alpha(3), beta(3), gamma(1), delta(1), epsilon(1). F(0) has four main subunits: a(1), b(1), b'(1) and c(10-14). The alpha and beta chains form an alternating ring which encloses part of the gamma chain. F(1) is attached to F(0) by a central stalk formed by the gamma and epsilon chains, while a peripheral stalk is formed by the delta, b and b' chains.

It is found in the plastid. The protein resides in the chloroplast thylakoid membrane. Functionally, f(1)F(0) ATP synthase produces ATP from ADP in the presence of a proton or sodium gradient. F-type ATPases consist of two structural domains, F(1) containing the extramembraneous catalytic core and F(0) containing the membrane proton channel, linked together by a central stalk and a peripheral stalk. During catalysis, ATP synthesis in the catalytic domain of F(1) is coupled via a rotary mechanism of the central stalk subunits to proton translocation. Component of the F(0) channel, it forms part of the peripheral stalk, linking F(1) to F(0). The chain is ATP synthase subunit b, chloroplastic from Amborella trichopoda.